Consider the following 422-residue polypeptide: MARTTAHITLLSDLTPPSQERTWLTAPHPTLPIVATCSSDKTVRVYSLSNFRLLSTITGGHKRSVRTCAWKPHVQGESVLATGSFDATVGIWRRWDSYGLLSSDHTTAAAASEDADSDSDEWRFAVLLDGHDSEVKSVSWSASGMLLATCARDKSIWIWEDLDDGDNNFETVAVMQEHEGDVKCVAWHPAEECLASGSYDDTIRLWREDLDDWGQVACLKGHGGTVWFVDWEGVENVPAGLQGEEGKWKESRALSGPRLASCSDDRTVRIWRRVPKEQLQQQQAGTPFGGTGIPSIIRPTGTDETWEEEAVLPKMHELPVYAVAWSKRTGLLASVGADGRLVLYEERFVDGSAQAMDTDGPASAPLSTEWVAVGVVEGAHGIYEINHVAWAKRADRGREEGKDEEVLITTADDGSVKVWTVR.

WD repeat units lie at residues 13-56, 60-102, 130-169, 177-220, 236-281, 315-354, and 379-420; these read DLTP…LLST, GHKR…GLLS, GHDS…DNNF, EHEG…ACLK, NVPA…QLQQ, MHEL…GSAQ, and AHGI…KVWT.

The protein belongs to the WD repeat CIA1 family.

Its function is as follows. Essential component of the cytosolic iron-sulfur (Fe/S) protein assembly machinery. Required for the maturation of extramitochondrial Fe/S proteins. The polypeptide is Probable cytosolic iron-sulfur protein assembly protein 1 (cia1) (Aspergillus terreus (strain NIH 2624 / FGSC A1156)).